We begin with the raw amino-acid sequence, 407 residues long: Imidazolonepropionase (407 aa).

Fe(3+)-binding residues include His-68 and His-70. Residues His-68 and His-70 each contribute to the Zn(2+) site. The 4-imidazolone-5-propanoate site is built by Arg-77, Tyr-140, and His-173. Tyr-140 serves as a coordination point for N-formimidoyl-L-glutamate. Residue His-238 coordinates Fe(3+). His-238 provides a ligand contact to Zn(2+). Gln-241 serves as a coordination point for 4-imidazolone-5-propanoate. Asp-313 provides a ligand contact to Fe(3+). Residue Asp-313 participates in Zn(2+) binding. Asn-315 and Gly-317 together coordinate N-formimidoyl-L-glutamate. A 4-imidazolone-5-propanoate-binding site is contributed by Thr-318.

Belongs to the metallo-dependent hydrolases superfamily. HutI family. The cofactor is Zn(2+). Fe(3+) serves as cofactor.

It is found in the cytoplasm. The enzyme catalyses 4-imidazolone-5-propanoate + H2O = N-formimidoyl-L-glutamate. The protein operates within amino-acid degradation; L-histidine degradation into L-glutamate; N-formimidoyl-L-glutamate from L-histidine: step 3/3. Functionally, catalyzes the hydrolytic cleavage of the carbon-nitrogen bond in imidazolone-5-propanoate to yield N-formimidoyl-L-glutamate. It is the third step in the universal histidine degradation pathway. The chain is Imidazolonepropionase from Burkholderia pseudomallei (strain 668).